Consider the following 437-residue polypeptide: Tol-Pal system protein TolB (437 aa).

The signal sequence occupies residues 1–30; sequence MLPTPSRSHKLSGYAAVLFFLWLVCSPAQA. The segment covering 410–423 has biased composition (polar residues); it reads SDGRTRQQLSTQTG. The interval 410–437 is disordered; sequence SDGRTRQQLSTQTGDIREPAWGPLRRLQ.

The protein belongs to the TolB family. The Tol-Pal system is composed of five core proteins: the inner membrane proteins TolA, TolQ and TolR, the periplasmic protein TolB and the outer membrane protein Pal. They form a network linking the inner and outer membranes and the peptidoglycan layer.

The protein localises to the periplasm. Functionally, part of the Tol-Pal system, which plays a role in outer membrane invagination during cell division and is important for maintaining outer membrane integrity. In Nitrosospira multiformis (strain ATCC 25196 / NCIMB 11849 / C 71), this protein is Tol-Pal system protein TolB.